The sequence spans 337 residues: MIQKNWQELIKPNKVDFITNGSRTHATVVAEPLERGFGLTLGNALRRVLLSSLRGAAVTAIQIDGVLHEFSSIPGVREDVTDIVLNVKEIAIRMEGEGPKRMVVRKEGPGVVTAGDIQTVGDVEILNPDHVICTLDEGAEIRMEFTVNTGKGYVPADRNRAEDAPIGLIPVDSLYSPVRKVSYKIENTREGQVLDYDKLTLNIETNGSVSGEDAVAYAARILQDQLAIFVNFEEPQKEAPQEQVAELAFNPALLKKVDELELSVRSANCLKNDNIVYIGDLIQKTEAEMLRTPNFGRKSLNEIKEVLASMGLHLGMEIPSWPPENIEDLAKRYEDQY.

The alpha N-terminal domain (alpha-NTD) stretch occupies residues 1-233; it reads MIQKNWQELI…DQLAIFVNFE (233 aa). Positions 249–337 are alpha C-terminal domain (alpha-CTD); that stretch reads FNPALLKKVD…DLAKRYEDQY (89 aa).

The protein belongs to the RNA polymerase alpha chain family. In terms of assembly, homodimer. The RNAP catalytic core consists of 2 alpha, 1 beta, 1 beta' and 1 omega subunit. When a sigma factor is associated with the core the holoenzyme is formed, which can initiate transcription.

It carries out the reaction RNA(n) + a ribonucleoside 5'-triphosphate = RNA(n+1) + diphosphate. In terms of biological role, DNA-dependent RNA polymerase catalyzes the transcription of DNA into RNA using the four ribonucleoside triphosphates as substrates. The protein is DNA-directed RNA polymerase subunit alpha of Brucella anthropi (strain ATCC 49188 / DSM 6882 / CCUG 24695 / JCM 21032 / LMG 3331 / NBRC 15819 / NCTC 12168 / Alc 37) (Ochrobactrum anthropi).